Here is a 702-residue protein sequence, read N- to C-terminus: Polyribonucleotide nucleotidyltransferase (702 aa).

The Mg(2+) site is built by Asp485 and Asp491. The region spanning 552–612 (PRTEIICIDP…EGVKKAISII (61 aa)) is the KH domain. The S1 motif domain maps to 622–690 (GEIYLGKVTK…NQGRINLSRK (69 aa)).

Belongs to the polyribonucleotide nucleotidyltransferase family. Mg(2+) is required as a cofactor.

The protein resides in the cytoplasm. It catalyses the reaction RNA(n+1) + phosphate = RNA(n) + a ribonucleoside 5'-diphosphate. Involved in mRNA degradation. Catalyzes the phosphorolysis of single-stranded polyribonucleotides processively in the 3'- to 5'-direction. This is Polyribonucleotide nucleotidyltransferase from Clostridium botulinum (strain 657 / Type Ba4).